The primary structure comprises 105 residues: Large ribosomal subunit protein uL24 (105 aa).

The protein belongs to the universal ribosomal protein uL24 family. In terms of assembly, part of the 50S ribosomal subunit.

Its function is as follows. One of two assembly initiator proteins, it binds directly to the 5'-end of the 23S rRNA, where it nucleates assembly of the 50S subunit. In terms of biological role, one of the proteins that surrounds the polypeptide exit tunnel on the outside of the subunit. This chain is Large ribosomal subunit protein uL24, found in Hahella chejuensis (strain KCTC 2396).